The sequence spans 177 residues: MNKEREARKYLRLLSVRRCRHIATIVELVREVIEPAILAPYELVDIEYGKMGGDYVLSVFVDKPEGITVNDTADLTDIISPLLDQIKPDPFPEQYFLEVTSPGLERPLKTKEQLADAVGSYIHVSLYKAVDKQKVFEGTLLSFEEDVLHMEYLDKTRRKEVEIPYSLVSKARLAVKF.

This sequence belongs to the RimP family.

It localises to the cytoplasm. Its function is as follows. Required for maturation of 30S ribosomal subunits. This Streptococcus sanguinis (strain SK36) protein is Ribosome maturation factor RimP.